The following is a 101-amino-acid chain: Apolipoprotein C-III (101 aa).

A signal peptide spans Met-1–Ala-20. The residue at position 64 (Met-64) is a Methionine sulfoxide. The segment at Lys-69–Pro-101 is lipid-binding. A glycan (O-linked (GalNAc...) threonine) is linked at Thr-96.

It belongs to the apolipoprotein C3 family. Post-translationally, the most abundant glycoforms are characterized by an O-linked disaccharide galactose linked to N-acetylgalactosamine (Gal-GalNAc), further modified with up to 3 sialic acid residues. Less abundant glycoforms are characterized by more complex and fucosylated glycan moieties. O-glycosylated on Thr-96 with a core 1 or possibly core 8 glycan. As to expression, synthesized predominantly in liver and to a lesser degree in intestine.

The protein resides in the secreted. Its function is as follows. Component of triglyceride-rich very low density lipoproteins (VLDL) and high density lipoproteins (HDL) in plasma. Plays a multifaceted role in triglyceride homeostasis. Intracellularly, promotes hepatic very low density lipoprotein 1 (VLDL1) assembly and secretion; extracellularly, attenuates hydrolysis and clearance of triglyceride-rich lipoproteins (TRLs). Impairs the lipolysis of TRLs by inhibiting lipoprotein lipase and the hepatic uptake of TRLs by remnant receptors. Formed of several curved helices connected via semiflexible hinges, so that it can wrap tightly around the curved micelle surface and easily adapt to the different diameters of its natural binding partners. This chain is Apolipoprotein C-III (Apoc3), found in Rattus norvegicus (Rat).